The following is a 320-amino-acid chain: 1-aminocyclopropane-1-carboxylate oxidase 3 (320 aa).

A Fe2OG dioxygenase domain is found at 154–254 (PNFGTKVSNY…RMSIASFYNP (101 aa)). Fe cation-binding residues include histidine 178, aspartate 180, and histidine 235.

The protein belongs to the iron/ascorbate-dependent oxidoreductase family. It depends on Fe cation as a cofactor. In terms of tissue distribution, flowers.

It carries out the reaction 1-aminocyclopropane-1-carboxylate + L-ascorbate + O2 = ethene + L-dehydroascorbate + hydrogen cyanide + CO2 + 2 H2O. It functions in the pathway alkene biosynthesis; ethylene biosynthesis via S-adenosyl-L-methionine; ethylene from S-adenosyl-L-methionine: step 2/2. This is 1-aminocyclopropane-1-carboxylate oxidase 3 (ACO3) from Cucumis melo (Muskmelon).